Here is a 170-residue protein sequence, read N- to C-terminus: Ribosome maturation factor RimM (170 aa).

The PRC barrel domain occupies 97-170 (HPDEYYWVDL…RIVVDWDPEF (74 aa)).

The protein belongs to the RimM family. Binds ribosomal protein uS19.

The protein resides in the cytoplasm. Its function is as follows. An accessory protein needed during the final step in the assembly of 30S ribosomal subunit, possibly for assembly of the head region. Essential for efficient processing of 16S rRNA. May be needed both before and after RbfA during the maturation of 16S rRNA. It has affinity for free ribosomal 30S subunits but not for 70S ribosomes. This Xylella fastidiosa (strain M23) protein is Ribosome maturation factor RimM.